Consider the following 248-residue polypeptide: uncharacterized protein (248 aa).

The 240-residue stretch at 7-246 (VQLSNLSWTF…PASTILLPTS (240 aa)) folds into the ABC transporter domain. Residue 43–50 (GQSGSGKS) coordinates ATP.

Belongs to the ABC transporter superfamily.

This is an uncharacterized protein from Mycobacterium tuberculosis (strain CDC 1551 / Oshkosh).